The primary structure comprises 158 residues: Transcription elongation factor GreA (158 aa).

The stretch at 53 to 73 (EQQGFIEGRIKEIEAKLSNAQ) forms a coiled coil.

The protein belongs to the GreA/GreB family.

In terms of biological role, necessary for efficient RNA polymerase transcription elongation past template-encoded arresting sites. The arresting sites in DNA have the property of trapping a certain fraction of elongating RNA polymerases that pass through, resulting in locked ternary complexes. Cleavage of the nascent transcript by cleavage factors such as GreA or GreB allows the resumption of elongation from the new 3'terminus. GreA releases sequences of 2 to 3 nucleotides. This chain is Transcription elongation factor GreA, found in Thioalkalivibrio sulfidiphilus (strain HL-EbGR7).